Reading from the N-terminus, the 716-residue chain is 1,4-alpha-glucan branching enzyme GlgB (716 aa).

Asp394 acts as the Nucleophile in catalysis. The Proton donor role is filled by Glu447.

It belongs to the glycosyl hydrolase 13 family. GlgB subfamily. In terms of assembly, monomer.

It carries out the reaction Transfers a segment of a (1-&gt;4)-alpha-D-glucan chain to a primary hydroxy group in a similar glucan chain.. The protein operates within glycan biosynthesis; glycogen biosynthesis. Its function is as follows. Catalyzes the formation of the alpha-1,6-glucosidic linkages in glycogen by scission of a 1,4-alpha-linked oligosaccharide from growing alpha-1,4-glucan chains and the subsequent attachment of the oligosaccharide to the alpha-1,6 position. This chain is 1,4-alpha-glucan branching enzyme GlgB, found in Photobacterium profundum (strain SS9).